The following is a 272-amino-acid chain: Catechol O-methyltransferase (272 aa).

Topologically, residues 1-6 (MLEAPP) are cytoplasmic. Residues 7–27 (LLLVAGGVGLALLALRWLATT) traverse the membrane as a helical; Signal-anchor for type II membrane protein segment. At 28–272 (DLQFFGRAFI…YKGLSGPARP (245 aa)) the chain is on the extracellular side. Residues valine 93, glutamate 115, serine 123, glutamate 141, 168–171 (GASQ), serine 170, and aspartate 192 each bind S-adenosyl-L-methionine. Aspartate 192 lines the Mg(2+) pocket. Lysine 195 is a substrate binding site. Residues aspartate 220 and asparagine 221 each coordinate Mg(2+). Substrate-binding residues include asparagine 221 and glutamate 250. Phosphoserine is present on serine 267.

This sequence belongs to the class I-like SAM-binding methyltransferase superfamily. Cation-dependent O-methyltransferase family. Mg(2+) is required as a cofactor.

It localises to the cytoplasm. The protein resides in the cell membrane. It catalyses the reaction a catechol + S-adenosyl-L-methionine = a guaiacol + S-adenosyl-L-homocysteine + H(+). It carries out the reaction 2-hydroxyestrone + S-adenosyl-L-methionine = 2-hydroxy-3-methoxy-estrone + S-adenosyl-L-homocysteine + H(+). The enzyme catalyses 4-hydroxyestrone + S-adenosyl-L-methionine = 4-methoxyestrone + S-adenosyl-L-homocysteine + H(+). The catalysed reaction is 2-hydroxyestrone + S-adenosyl-L-methionine = 2-methoxyestrone + S-adenosyl-L-homocysteine + H(+). It catalyses the reaction 4-hydroxy-17beta-estradiol + S-adenosyl-L-methionine = 4-methoxy-17beta-estradiol + S-adenosyl-L-homocysteine + H(+). It carries out the reaction 2-hydroxy-17beta-estradiol + S-adenosyl-L-methionine = 2-hydroxy-3-methoxy-17beta-estradiol + S-adenosyl-L-homocysteine + H(+). The enzyme catalyses 2-hydroxy-17beta-estradiol + S-adenosyl-L-methionine = 2-methoxy-17beta-estradiol + S-adenosyl-L-homocysteine + H(+). Functionally, catalyzes the O-methylation, and thereby the inactivation, of catecholamine neurotransmitters and catechol hormones. Also shortens the biological half-lives of certain neuroactive drugs, like L-DOPA, alpha-methyl DOPA and isoproterenol. This chain is Catechol O-methyltransferase (COMT), found in Bos taurus (Bovine).